We begin with the raw amino-acid sequence, 72 residues long: MATRDSGGGQQHTNRHADEVEEVAAEGNDASDLKERHEKLSEDVDSLLDEIDDVLEENAEEFVKGYVQKGGE.

Residues 1–10 (MATRDSGGGQ) show a composition bias toward gly residues. A disordered region spans residues 1 to 41 (MATRDSGGGQQHTNRHADEVEEVAAEGNDASDLKERHEKLS). Residues 21 to 61 (EEVAAEGNDASDLKERHEKLSEDVDSLLDEIDDVLEENAEE) are a coiled coil. Residues 28–66 (NDASDLKERHEKLSEDVDSLLDEIDDVLEENAEEFVKGY) form an ARC ATPase binding region. Basic and acidic residues predominate over residues 31 to 41 (SDLKERHEKLS). Residue Glu72 forms an Isoglutamyl lysine isopeptide (Glu-Lys) (interchain with K-? in acceptor proteins) linkage.

This sequence belongs to the prokaryotic ubiquitin-like protein family. As to quaternary structure, strongly interacts with the proteasome-associated ATPase ARC through a hydrophobic interface; the interacting region of Pup lies in its C-terminal half. There is one Pup binding site per ARC hexamer ring.

It participates in protein degradation; proteasomal Pup-dependent pathway. Its function is as follows. Protein modifier that is covalently attached to lysine residues of substrate proteins, thereby targeting them for proteasomal degradation. The tagging system is termed pupylation. This chain is Prokaryotic ubiquitin-like protein Pup, found in Frankia alni (strain DSM 45986 / CECT 9034 / ACN14a).